The following is a 334-amino-acid chain: Holliday junction branch migration complex subunit RuvB (334 aa).

Residues 4-184 (ADRLVSAGVI…FGIVQRLEFY (181 aa)) are large ATPase domain (RuvB-L). ATP-binding positions include Ile-23, Arg-24, Gly-65, Lys-68, Thr-69, Thr-70, 131 to 133 (EDY), Arg-174, Tyr-184, and Arg-221. Position 69 (Thr-69) interacts with Mg(2+). The interval 185 to 255 (RVEDLQHIVG…VASRALDMLS (71 aa)) is small ATPAse domain (RuvB-S). Residues 258–334 (SEGFDYMDRK…YKHFGITREG (77 aa)) form a head domain (RuvB-H) region. Arg-294, Arg-313, and Arg-318 together coordinate DNA.

The protein belongs to the RuvB family. Homohexamer. Forms an RuvA(8)-RuvB(12)-Holliday junction (HJ) complex. HJ DNA is sandwiched between 2 RuvA tetramers; dsDNA enters through RuvA and exits via RuvB. An RuvB hexamer assembles on each DNA strand where it exits the tetramer. Each RuvB hexamer is contacted by two RuvA subunits (via domain III) on 2 adjacent RuvB subunits; this complex drives branch migration. In the full resolvosome a probable DNA-RuvA(4)-RuvB(12)-RuvC(2) complex forms which resolves the HJ.

It is found in the cytoplasm. The enzyme catalyses ATP + H2O = ADP + phosphate + H(+). In terms of biological role, the RuvA-RuvB-RuvC complex processes Holliday junction (HJ) DNA during genetic recombination and DNA repair, while the RuvA-RuvB complex plays an important role in the rescue of blocked DNA replication forks via replication fork reversal (RFR). RuvA specifically binds to HJ cruciform DNA, conferring on it an open structure. The RuvB hexamer acts as an ATP-dependent pump, pulling dsDNA into and through the RuvAB complex. RuvB forms 2 homohexamers on either side of HJ DNA bound by 1 or 2 RuvA tetramers; 4 subunits per hexamer contact DNA at a time. Coordinated motions by a converter formed by DNA-disengaged RuvB subunits stimulates ATP hydrolysis and nucleotide exchange. Immobilization of the converter enables RuvB to convert the ATP-contained energy into a lever motion, pulling 2 nucleotides of DNA out of the RuvA tetramer per ATP hydrolyzed, thus driving DNA branch migration. The RuvB motors rotate together with the DNA substrate, which together with the progressing nucleotide cycle form the mechanistic basis for DNA recombination by continuous HJ branch migration. Branch migration allows RuvC to scan DNA until it finds its consensus sequence, where it cleaves and resolves cruciform DNA. The sequence is that of Holliday junction branch migration complex subunit RuvB from Erwinia tasmaniensis (strain DSM 17950 / CFBP 7177 / CIP 109463 / NCPPB 4357 / Et1/99).